A 1614-amino-acid chain; its full sequence is Chitin synthase csmA (1614 aa).

The disordered stretch occupies residues 1–22; that stretch reads MAGPAPSGRTPSHAQSSLPSLP. A Myosin motor domain is found at 1–788; sequence MAGPAPSGRT…CWADLAKLGE (788 aa). Positions 9–19 are enriched in polar residues; the sequence is RTPSHAQSSLP. 105-112 is an ATP binding site; it reads GESGSGKT. Positions 600–650 are disordered; it reads QVSSKPMRMPSMARRKAGPSRLAFDAPEGDDQDEYDSQAGSMSKSSARRKS. The segment covering 626–635 has biased composition (acidic residues); that stretch reads PEGDDQDEYD. The actin-binding stretch occupies residues 668-692; sequence LDIVSKCLNSANLNPYFVFCLKPND. 2 consecutive transmembrane segments (helical) span residues 898–918 and 937–957; these read WMAIVYLLTFYIPDFLIKTFG and LIIWFSCAFAIFFIVAFPGLI. The 60-residue stretch at 961 to 1020 folds into the Cytochrome b5 heme-binding domain; it reads QHVYSTAELSSHNGKDGHNSFVAIRGIVFNLDKFMPSHYPDIVPEKSLKKYAGTDATGLF. 2 N-linked (GlcNAc...) asparagine glycosylation sites follow: N1047 and N1072. Residues 1209-1229 traverse the membrane as a helical segment; the sequence is FILAISIFICLIVVFKFLAAL. An N-linked (GlcNAc...) asparagine glycan is attached at N1572.

In the N-terminal section; belongs to the TRAFAC class myosin-kinesin ATPase superfamily. Myosin family. This sequence in the C-terminal section; belongs to the chitin synthase family. Class V subfamily.

The protein localises to the cell membrane. The protein resides in the cell septum. It is found in the cell tip. The enzyme catalyses [(1-&gt;4)-N-acetyl-beta-D-glucosaminyl](n) + UDP-N-acetyl-alpha-D-glucosamine = [(1-&gt;4)-N-acetyl-beta-D-glucosaminyl](n+1) + UDP + H(+). Polymerizes chitin, a structural polymer of the cell wall and septum, by transferring the sugar moiety of UDP-GlcNAc to the non-reducing end of the growing chitin polymer. Acts as the major chitin synthase in Aspergillus niger involved in cell wall integrity which is principally responsible for chitin synthesis at the lateral cell wall. Plays an important role in septal growth or maintenance. Mediates colony spore formation. The protein is Chitin synthase csmA of Aspergillus niger (strain ATCC MYA-4892 / CBS 513.88 / FGSC A1513).